The chain runs to 215 residues: 3,4-dihydroxy-2-butanone 4-phosphate synthase (215 aa).

Residues 37 to 38 (RE), Asp42, 150 to 154 (RPGHT), and Glu174 each bind D-ribulose 5-phosphate. Position 38 (Glu38) interacts with Mg(2+). Position 153 (His153) interacts with Mg(2+).

Belongs to the DHBP synthase family. As to quaternary structure, homodimer. It depends on Mg(2+) as a cofactor. The cofactor is Mn(2+).

It carries out the reaction D-ribulose 5-phosphate = (2S)-2-hydroxy-3-oxobutyl phosphate + formate + H(+). Its pathway is cofactor biosynthesis; riboflavin biosynthesis; 2-hydroxy-3-oxobutyl phosphate from D-ribulose 5-phosphate: step 1/1. Functionally, catalyzes the conversion of D-ribulose 5-phosphate to formate and 3,4-dihydroxy-2-butanone 4-phosphate. This is 3,4-dihydroxy-2-butanone 4-phosphate synthase from Buchnera aphidicola subsp. Acyrthosiphon pisum (strain 5A).